Consider the following 183-residue polypeptide: Cell division protein SepF (183 aa).

Residues S149–G183 are disordered.

This sequence belongs to the SepF family. As to quaternary structure, homodimer. Interacts with FtsZ.

The protein localises to the cytoplasm. Cell division protein that is part of the divisome complex and is recruited early to the Z-ring. Probably stimulates Z-ring formation, perhaps through the cross-linking of FtsZ protofilaments. Its function overlaps with FtsA. The protein is Cell division protein SepF of Synechococcus sp. (strain RCC307).